A 329-amino-acid chain; its full sequence is MSKAPVRVAVTGAAGQIGYSLLFRIASGEMLGKDQPVILQLLDLPQAQKAVKGVMMELEDCAFPLLAGMVATDDPNVAFKDADYCLLVGARPRGPGMERADLLTANGAIFTVQGKAIAENANENVKVLVVGNPCNTNAYIAGAAARKVGRTNPNNYHGMLRLDHNRALSQLAAKTGRPVSSLKKMVVWGNHSPTMYADYRFCTSNGDSVKALVNDHAWNNDVFLPTVGKRGAAIIDARGLSSAASAANAAIDHMHDWALGSDDWVTMGVPSDGSYGIPAGVVFGVPCECKNGDFKIIQGLEIDEYSREKINKTLGELEDERAAVADMLK.

NAD(+) is bound at residue 12 to 18; sequence GAAGQIG. 2 residues coordinate substrate: arginine 93 and arginine 99. Residues asparagine 106, glutamine 113, and 130 to 132 each bind NAD(+); that span reads VGN. The substrate site is built by asparagine 132 and arginine 166. Histidine 191 (proton acceptor) is an active-site residue.

It belongs to the LDH/MDH superfamily. MDH type 2 family.

It carries out the reaction (S)-malate + NAD(+) = oxaloacetate + NADH + H(+). Catalyzes the reversible oxidation of malate to oxaloacetate. The sequence is that of Malate dehydrogenase from Aromatoleum aromaticum (strain DSM 19018 / LMG 30748 / EbN1) (Azoarcus sp. (strain EbN1)).